A 164-amino-acid polypeptide reads, in one-letter code: Peptide deformylase (164 aa).

The Fe cation site is built by Cys87 and His129. Glu130 is an active-site residue. His133 is a Fe cation binding site.

The protein belongs to the polypeptide deformylase family. The cofactor is Fe(2+).

It carries out the reaction N-terminal N-formyl-L-methionyl-[peptide] + H2O = N-terminal L-methionyl-[peptide] + formate. Functionally, removes the formyl group from the N-terminal Met of newly synthesized proteins. Requires at least a dipeptide for an efficient rate of reaction. N-terminal L-methionine is a prerequisite for activity but the enzyme has broad specificity at other positions. The polypeptide is Peptide deformylase (Thermotoga petrophila (strain ATCC BAA-488 / DSM 13995 / JCM 10881 / RKU-1)).